We begin with the raw amino-acid sequence, 35 residues long: Cupiennin-2e (35 aa).

A Glutamic acid 1-amide modification is found at Glu35.

Expressed by the venom gland.

It localises to the secreted. The sequence is that of Cupiennin-2e from Cupiennius salei (American wandering spider).